A 336-amino-acid chain; its full sequence is Cytosolic Fe-S cluster assembly factor NBP35 (336 aa).

The segment at 1–20 is disordered; that stretch reads MIATQRPFPIPSPVPLAPSS. 4 residues coordinate [4Fe-4S] cluster: cysteine 35, cysteine 49, cysteine 52, and cysteine 58. 88–95 lines the ATP pocket; it reads GKGGVGKS. [4Fe-4S] cluster-binding residues include cysteine 261 and cysteine 264.

This sequence belongs to the Mrp/NBP35 ATP-binding proteins family. NUBP1/NBP35 subfamily. Heterotetramer of 2 NBP35 and 2 CFD1 chains. [4Fe-4S] cluster is required as a cofactor.

It localises to the cytoplasm. Component of the cytosolic iron-sulfur (Fe/S) protein assembly (CIA) machinery. Required for maturation of extramitochondrial Fe-S proteins. The NBP35-CFD1 heterotetramer forms a Fe-S scaffold complex, mediating the de novo assembly of an Fe-S cluster and its transfer to target apoproteins. The polypeptide is Cytosolic Fe-S cluster assembly factor NBP35 (Cryptococcus neoformans var. neoformans serotype D (strain B-3501A) (Filobasidiella neoformans)).